The following is a 340-amino-acid chain: Cytochrome P450 monooxygenase cheG (340 aa).

N25 carries N-linked (GlcNAc...) asparagine glycosylation. A helical transmembrane segment spans residues 37-57 (MLLGIPTVILSLTPAVLRLLI). C283 provides a ligand contact to heme. The disordered stretch occupies residues 308–340 (LPPGQGKPEKGSMPNGSMSPDTKAKVLFRSRKL). An N-linked (GlcNAc...) asparagine glycan is attached at N322.

The protein belongs to the cytochrome P450 family. The cofactor is heme.

The protein resides in the membrane. Its pathway is secondary metabolite biosynthesis. Functionally, cytochrome P450 monooxygenase; part of the gene cluster that mediates the biosynthesis of chaetoglobosin A which has a unique inhibitory activity against actin polymerization in mammalian cells. Chaetoglobosin A and its intermediates are involved in the morphological differentiation of C.globosum. The first step of the pathway is the synthesis of prochaetoglobosin I via condensation of one acetyl-CoA, 8 malonyl-CoA, and a L-tryptophan molecule by the PKS-NRPS hybrid synthetase cheA, followed by reduction of backbone double bond to install desired geometry by the enoyl reductase cheB. Further multiple oxidation steps performed by the cytochrome P450 monooxygenases cheE and cheG, as well as by the FAD-linked oxidoreductase cheF, lead to the formation of chaetoglobosin A. Depending on the order of action of these reductases, distinct intermediates can be identified. Within the pathway, the cytochrome P450 monooxygenase cheE catalyzes a stereospecific epoxidation on prochaetoglobosin I, cytoglobosin D, and chaetoglobosin J intermediates. The FAD-linked oxidoreductase cheF performs dehydrogenation of the C-20 hydroxyl groups in the 20-dihyrochaetoglobosin A and cytoglobosin D intermediates. Finally, the cytochrome P450 monooxygenase cheG can catalyze the stereospecific dihydroxylation of prochaetoglobosin I and prochaetoglobosin IV at C-19 and C-20, respectively. The Diels-Alderase cheD may play a role in the post-PKS-NRPS biosynthetic steps catalyzing Diels-Alder cyclization. This Chaetomium globosum (strain ATCC 6205 / CBS 148.51 / DSM 1962 / NBRC 6347 / NRRL 1970) (Soil fungus) protein is Cytochrome P450 monooxygenase cheG.